A 241-amino-acid polypeptide reads, in one-letter code: MQQFQQDNQYFIFNFDRTFEQATEFFQAEFWQKQERVIGSAKGRGTTYFLQTEDWFGVNCALRHYYRGGLWGKLNKDRYRFSALETTRSFAEFHLLQRLYEAGLPVPKPIAARIQKGKLGICYQADILTEKIENAQDLTALLQTQTLPKETWRQIGRLIRKLHDLQICHTDLNAHNILLQQAEQGQKCWLLDFDKCGEKSGDFWKVQNLNRLKRSFEKEVGRMNIQFTEQNWADLMAAYHQ.

Asp171 is an active-site residue.

It belongs to the protein kinase superfamily. KdkA/RfaP family.

It localises to the cell inner membrane. The catalysed reaction is an alpha-Kdo-(2-&gt;6)-lipid IVA + ATP = a 4-O-phospho-alpha-Kdo-(2-&gt;6)-lipid IVA + ADP + H(+). The protein operates within bacterial outer membrane biogenesis; LPS core biosynthesis. In terms of biological role, catalyzes the ATP-dependent phosphorylation of the 3-deoxy-D-manno-octulosonic acid (Kdo) residue in Kdo-lipid IV(A) at the 4-OH position. This is 3-deoxy-D-manno-octulosonic acid kinase from Haemophilus influenzae (strain PittEE).